The primary structure comprises 162 residues: Ribosome-binding factor A (162 aa).

The tract at residues 124–162 is disordered; sequence ARVRSGAKPAGEADPYRESGSGVEPGRDGSIGDDDQPEY.

This sequence belongs to the RbfA family. Monomer. Binds 30S ribosomal subunits, but not 50S ribosomal subunits or 70S ribosomes.

Its subcellular location is the cytoplasm. In terms of biological role, one of several proteins that assist in the late maturation steps of the functional core of the 30S ribosomal subunit. Associates with free 30S ribosomal subunits (but not with 30S subunits that are part of 70S ribosomes or polysomes). Required for efficient processing of 16S rRNA. May interact with the 5'-terminal helix region of 16S rRNA. This is Ribosome-binding factor A from Mycolicibacterium paratuberculosis (strain ATCC BAA-968 / K-10) (Mycobacterium paratuberculosis).